The chain runs to 912 residues: Metabotropic glutamate receptor 4 (912 aa).

Residues 1–32 (MSGKGGWAWWWARLPLCLLLSLYGSWVPSSLG) form the signal peptide. The Extracellular portion of the chain corresponds to 33–586 (KPKGHPHMNS…PIVKLEWDSP (554 aa)). An intrachain disulfide couples Cys67 to Cys109. N-linked (GlcNAc...) asparagine glycosylation occurs at Asn98. L-glutamate-binding positions include Ser159, 180–182 (AST), and Tyr230. 7 disulfide bridges follow: Cys249–Cys538, Cys372–Cys388, Cys428–Cys435, Cys520–Cys539, Cys524–Cys542, Cys545–Cys557, and Cys560–Cys573. N-linked (GlcNAc...) asparagine glycosylation is present at Asn301. An L-glutamate-binding site is contributed by Asp312. An L-glutamate-binding site is contributed by Lys405. A helical transmembrane segment spans residues 587–607 (WAVLPLFLAVVGIAATLFVVV). Over 608–624 (TFVRYNDTPIVKASGRE) the chain is Cytoplasmic. Residues 625-645 (LSYVLLAGIFLCYATTFLMIA) traverse the membrane as a helical segment. The Extracellular portion of the chain corresponds to 646–653 (EPDLGTCS). Residues 654–671 (LRRIFLGLGMSISYAALL) traverse the membrane as a helical segment. At 672-699 (TKTNRIYRIFEQGKRSVSAPRFISPASQ) the chain is on the cytoplasmic side. The chain crosses the membrane as a helical span at residues 700–720 (LAITFVLISLQLLCICVWFVV). Residues 721–751 (DPSHSVVDFQDQRTLDPRFARGVLKCDISDL) are Extracellular-facing. Residues 752–772 (SLICLLGYSMLLMVTCTVYAI) form a helical membrane-spanning segment. The Cytoplasmic portion of the chain corresponds to 773–786 (KTRGVPETFNEAKP). Residues 787 to 807 (IGFTMYTTCIVWLAFIPIFFG) form a helical membrane-spanning segment. The Extracellular segment spans residues 808 to 826 (TSQSADKLYIQTTTLTVSV). A helical membrane pass occupies residues 827–847 (SLSASVSLGMLYMPKVYIILF). Over 848–912 (HPEQNVPKRK…TYVTYTNHAI (65 aa)) the chain is Cytoplasmic.

Belongs to the G-protein coupled receptor 3 family. In terms of assembly, interacts with PICK1.

It is found in the cell membrane. G-protein coupled receptor for glutamate. Ligand binding causes a conformation change that triggers signaling via guanine nucleotide-binding proteins (G proteins) and modulates the activity of down-stream effectors. Signaling inhibits adenylate cyclase activity. This is Metabotropic glutamate receptor 4 (Grm4) from Mus musculus (Mouse).